We begin with the raw amino-acid sequence, 155 residues long: Large ribosomal subunit protein uL13 (155 aa).

Belongs to the universal ribosomal protein uL13 family. Part of the 50S ribosomal subunit.

In terms of biological role, this protein is one of the early assembly proteins of the 50S ribosomal subunit, although it is not seen to bind rRNA by itself. It is important during the early stages of 50S assembly. The protein is Large ribosomal subunit protein uL13 of Rickettsia akari (strain Hartford).